Consider the following 338-residue polypeptide: Phenylalanine--tRNA ligase alpha subunit (338 aa).

Mg(2+) is bound at residue Glu253.

It belongs to the class-II aminoacyl-tRNA synthetase family. Phe-tRNA synthetase alpha subunit type 1 subfamily. In terms of assembly, tetramer of two alpha and two beta subunits. The cofactor is Mg(2+).

It localises to the cytoplasm. The catalysed reaction is tRNA(Phe) + L-phenylalanine + ATP = L-phenylalanyl-tRNA(Phe) + AMP + diphosphate + H(+). This Legionella pneumophila (strain Paris) protein is Phenylalanine--tRNA ligase alpha subunit.